The sequence spans 476 residues: MEDGVTPPLLITEKDTTMIRVKEEVKKQLWLSAPLIGVSLLQYSLQVISVMFVGHLGSLPLSAASIATSFASVTGFTFLLGTASALETLCGQAYGAKLYGKLGIQMQRAMFVLLILSVPLSIIWANTEQILVLVHQDKSIASVAGSYAKYMIPSLFAYGLLQCINRFLQAQNNVFPVFVCSGITTCLHLLLCWLFVLKTGLGYRGAALAISVSYWFNVILLSCYVKFSPSCSHSWTGFSKEAFQELYDFSKIAFPSAVMVCLELWSFELLVLASGLLPNPVLETSVLSICLNTSLTIWQISVGLGGAASIRVSNELGAGNPQVAKLAVYVIVGIAVAEGIVVVTVLLSIRKILGHAFSSDPKIIAYAASMIPIVACGNFLDGLQCVLSGVARGCGWQKIGACVNLGSYYLVGVPLGLLLGFHFHIGGRGLWLGIVTALSVQVLCLSLVTIFTNWDKEAKKATNRVGSSDDKDGDVQ.

12 helical membrane passes run 29-51 (LWLS…ISVM), 70-90 (FASV…ETLC), 111-131 (FVLL…EQIL), 140-160 (IASV…AYGL), 177-197 (VFVC…LFVL), 205-225 (GAAL…SCYV), 252-272 (IAFP…LLVL), 286-306 (VLSI…GLGG), 326-346 (LAVY…VTVL), 363-383 (IIAY…LDGL), 405-425 (LGSY…HFHI), and 431-451 (WLGI…VTIF).

Belongs to the multi antimicrobial extrusion (MATE) (TC 2.A.66.1) family.

Its subcellular location is the membrane. The chain is Protein DETOXIFICATION 17 from Arabidopsis thaliana (Mouse-ear cress).